A 729-amino-acid polypeptide reads, in one-letter code: Phosphoribosylformylglycinamidine synthase subunit PurL (729 aa).

Histidine 54 is a catalytic residue. Residues tyrosine 57 and lysine 96 each contribute to the ATP site. Residue glutamate 98 participates in Mg(2+) binding. Residues serine 99–histidine 102 and arginine 121 contribute to the substrate site. The active-site Proton acceptor is histidine 100. Aspartate 122 provides a ligand contact to Mg(2+). Residue glutamine 245 participates in substrate binding. Residue aspartate 273 participates in Mg(2+) binding. Glutamate 317–glutamine 319 contacts substrate. 2 residues coordinate ATP: aspartate 495 and glycine 532. Asparagine 533 provides a ligand contact to Mg(2+). Serine 535 serves as a coordination point for substrate.

Belongs to the FGAMS family. As to quaternary structure, monomer. Part of the FGAM synthase complex composed of 1 PurL, 1 PurQ and 2 PurS subunits.

It localises to the cytoplasm. The enzyme catalyses N(2)-formyl-N(1)-(5-phospho-beta-D-ribosyl)glycinamide + L-glutamine + ATP + H2O = 2-formamido-N(1)-(5-O-phospho-beta-D-ribosyl)acetamidine + L-glutamate + ADP + phosphate + H(+). Its pathway is purine metabolism; IMP biosynthesis via de novo pathway; 5-amino-1-(5-phospho-D-ribosyl)imidazole from N(2)-formyl-N(1)-(5-phospho-D-ribosyl)glycinamide: step 1/2. In terms of biological role, part of the phosphoribosylformylglycinamidine synthase complex involved in the purines biosynthetic pathway. Catalyzes the ATP-dependent conversion of formylglycinamide ribonucleotide (FGAR) and glutamine to yield formylglycinamidine ribonucleotide (FGAM) and glutamate. The FGAM synthase complex is composed of three subunits. PurQ produces an ammonia molecule by converting glutamine to glutamate. PurL transfers the ammonia molecule to FGAR to form FGAM in an ATP-dependent manner. PurS interacts with PurQ and PurL and is thought to assist in the transfer of the ammonia molecule from PurQ to PurL. The protein is Phosphoribosylformylglycinamidine synthase subunit PurL of Staphylococcus aureus (strain bovine RF122 / ET3-1).